The sequence spans 90 residues: Guanine nucleotide-binding protein subunit gamma (90 aa).

Residue Cys86 is the site of S-palmitoyl cysteine attachment. Cysteine methyl ester is present on Cys87. Cys87 carries S-farnesyl cysteine lipidation. The propeptide at 88 to 90 (CIM) is removed in mature form.

It belongs to the G protein gamma family. In terms of assembly, g proteins are composed of 3 units, alpha, beta and gamma.

It is found in the membrane. This is Guanine nucleotide-binding protein subunit gamma from Eremothecium gossypii (strain ATCC 10895 / CBS 109.51 / FGSC 9923 / NRRL Y-1056) (Yeast).